Consider the following 78-residue polypeptide: Small ribosomal subunit protein bS20 (78 aa).

A disordered region spans residues 55-78 (KSKGLIHKNKASRDKARLASKLAK).

This sequence belongs to the bacterial ribosomal protein bS20 family.

Functionally, binds directly to 16S ribosomal RNA. This chain is Small ribosomal subunit protein bS20, found in Streptococcus mutans serotype c (strain ATCC 700610 / UA159).